A 252-amino-acid chain; its full sequence is Triosephosphate isomerase (252 aa).

Residue 10-12 (NWK) participates in substrate binding. His96 serves as the catalytic Electrophile. Residue Glu168 is the Proton acceptor of the active site. Residues Gly174, Ser214, and 235–236 (GG) contribute to the substrate site.

The protein belongs to the triosephosphate isomerase family. As to quaternary structure, homodimer.

It is found in the cytoplasm. It carries out the reaction D-glyceraldehyde 3-phosphate = dihydroxyacetone phosphate. Its pathway is carbohydrate biosynthesis; gluconeogenesis. It functions in the pathway carbohydrate degradation; glycolysis; D-glyceraldehyde 3-phosphate from glycerone phosphate: step 1/1. In terms of biological role, involved in the gluconeogenesis. Catalyzes stereospecifically the conversion of dihydroxyacetone phosphate (DHAP) to D-glyceraldehyde-3-phosphate (G3P). The sequence is that of Triosephosphate isomerase from Streptococcus pyogenes serotype M6 (strain ATCC BAA-946 / MGAS10394).